Reading from the N-terminus, the 512-residue chain is Maturase K (512 aa).

The protein belongs to the intron maturase 2 family. MatK subfamily.

It localises to the plastid. Its subcellular location is the chloroplast. Usually encoded in the trnK tRNA gene intron. Probably assists in splicing its own and other chloroplast group II introns. This chain is Maturase K, found in Oenothera parviflora (Small-flowered evening primrose).